The sequence spans 102 residues: Lipopolysaccharide assembly protein A (102 aa).

Residues 1-2 lie on the Cytoplasmic side of the membrane; it reads MK. The helical transmembrane segment at 3–23 threads the bilayer; the sequence is YLLIFLLVLAIFVISVTLGAQ. The Periplasmic segment spans residues 24–43; the sequence is NDQQVTFNYLLAQGEYRIST. The helical transmembrane segment at 44–64 threads the bilayer; sequence LLAVLFAAGFAIGWLICGLFW. A coiled-coil region spans residues 64-92; sequence WLRVRVSLARAERKIKRLENQLSPATDVA. The Cytoplasmic portion of the chain corresponds to 65 to 102; sequence LRVRVSLARAERKIKRLENQLSPATDVAVVPHSSAAKE.

It belongs to the LapA family.

It localises to the cell inner membrane. In terms of biological role, involved in the assembly of lipopolysaccharide (LPS). This is Lipopolysaccharide assembly protein A from Escherichia coli (strain K12).